Here is a 117-residue protein sequence, read N- to C-terminus: MELGLCWVFLVAILEGVQCEVQLVESGGGLVQPGGSLRLSCAASGFTFSSYEMNWVRQAPGKGLEWVSYISSSGSTIYYADSVKGRFTISRDNAKNSLYLQMNSLRAEDTAVYYCAR.

A signal peptide spans 1–19; that stretch reads MELGLCWVFLVAILEGVQC. The interval 20–44 is framework-1; the sequence is EVQLVESGGGLVQPGGSLRLSCAAS. The region spanning 20–117 is the Ig-like domain; sequence EVQLVESGGG…EDTAVYYCAR (98 aa). An intrachain disulfide couples Cys-41 to Cys-115. The complementarity-determining-1 stretch occupies residues 45-52; the sequence is GFTFSSYE. A framework-2 region spans residues 53 to 69; it reads MNWVRQAPGKGLEWVSY. Residues 70 to 77 are complementarity-determining-2; that stretch reads ISSSGSTI. The framework-3 stretch occupies residues 78 to 115; sequence YYADSVKGRFTISRDNAKNSLYLQMNSLRAEDTAVYYC. Residues 116 to 117 form a complementarity-determining-3 region; the sequence is AR.

In terms of assembly, immunoglobulins are composed of two identical heavy chains and two identical light chains; disulfide-linked. Post-translationally, the N-terminus is blocked.

The protein resides in the secreted. Its subcellular location is the cell membrane. Functionally, v region of the variable domain of immunoglobulin heavy chains that participates in the antigen recognition. Immunoglobulins, also known as antibodies, are membrane-bound or secreted glycoproteins produced by B lymphocytes. In the recognition phase of humoral immunity, the membrane-bound immunoglobulins serve as receptors which, upon binding of a specific antigen, trigger the clonal expansion and differentiation of B lymphocytes into immunoglobulins-secreting plasma cells. Secreted immunoglobulins mediate the effector phase of humoral immunity, which results in the elimination of bound antigens. The antigen binding site is formed by the variable domain of one heavy chain, together with that of its associated light chain. Thus, each immunoglobulin has two antigen binding sites with remarkable affinity for a particular antigen. The variable domains are assembled by a process called V-(D)-J rearrangement and can then be subjected to somatic hypermutations which, after exposure to antigen and selection, allow affinity maturation for a particular antigen. The protein is Immunoglobulin heavy variable 3-48 of Homo sapiens (Human).